The primary structure comprises 155 residues: MASASPSSSRRLTKEYSDLREHPIPDIRVNLVDDNLFHWACTALGPSDSVYAGGKFHFSLKFPLDYPFQPPTIEFTTRIYHPNFDSEGNVCLAILKQQVFKPSIKLRSVLEQILQLLREPNPDDPLVASIAEQYRNDRPSFDKIARDYVEQFAKS.

The region spanning 7-154 (SSSRRLTKEY…ARDYVEQFAK (148 aa)) is the UBC core domain. C91 functions as the Glycyl thioester intermediate in the catalytic mechanism.

This sequence belongs to the ubiquitin-conjugating enzyme family.

The enzyme catalyses S-ubiquitinyl-[E1 ubiquitin-activating enzyme]-L-cysteine + [E2 ubiquitin-conjugating enzyme]-L-cysteine = [E1 ubiquitin-activating enzyme]-L-cysteine + S-ubiquitinyl-[E2 ubiquitin-conjugating enzyme]-L-cysteine.. It participates in protein modification; protein ubiquitination. In terms of biological role, catalyzes the covalent attachment of ubiquitin to other proteins. Mediates the selective degradation of short-lived and abnormal proteins. In Schizosaccharomyces pombe (strain 972 / ATCC 24843) (Fission yeast), this protein is Ubiquitin-conjugating enzyme E2 14 (ubc14).